The chain runs to 303 residues: Acetylglutamate kinase (303 aa).

Residues 69-70 (GG), Arg91, and Asn201 each bind substrate.

It belongs to the acetylglutamate kinase family. ArgB subfamily.

It is found in the cytoplasm. The enzyme catalyses N-acetyl-L-glutamate + ATP = N-acetyl-L-glutamyl 5-phosphate + ADP. It functions in the pathway amino-acid biosynthesis; L-arginine biosynthesis; N(2)-acetyl-L-ornithine from L-glutamate: step 2/4. Functionally, catalyzes the ATP-dependent phosphorylation of N-acetyl-L-glutamate. This Novosphingobium aromaticivorans (strain ATCC 700278 / DSM 12444 / CCUG 56034 / CIP 105152 / NBRC 16084 / F199) protein is Acetylglutamate kinase.